The sequence spans 84 residues: Small ribosomal subunit protein eS27 (84 aa).

Basic and acidic residues predominate over residues 1–16 (MPLAKDPLHPSPEEEK). The interval 1-25 (MPLAKDPLHPSPEEEKRKHKKKRLV) is disordered. S11 is modified (phosphoserine). The C4-type zinc-finger motif lies at 38 to 60 (PGCYKITTVFSHAQTVVLCVGCS).

It belongs to the eukaryotic ribosomal protein eS27 family. As to quaternary structure, component of the small ribosomal subunit. Part of the small subunit (SSU) processome, composed of more than 70 proteins and the RNA chaperone small nucleolar RNA (snoRNA) U3. Zn(2+) serves as cofactor.

The protein resides in the cytoplasm. Its subcellular location is the nucleus. The protein localises to the nucleolus. Component of the small ribosomal subunit. The ribosome is a large ribonucleoprotein complex responsible for the synthesis of proteins in the cell. Required for proper rRNA processing and maturation of 18S rRNAs. Part of the small subunit (SSU) processome, first precursor of the small eukaryotic ribosomal subunit. During the assembly of the SSU processome in the nucleolus, many ribosome biogenesis factors, an RNA chaperone and ribosomal proteins associate with the nascent pre-rRNA and work in concert to generate RNA folding, modifications, rearrangements and cleavage as well as targeted degradation of pre-ribosomal RNA by the RNA exosome. The protein is Small ribosomal subunit protein eS27 (RPS27) of Pongo abelii (Sumatran orangutan).